The sequence spans 312 residues: Glyoxylate/hydroxypyruvate reductase A (312 aa).

Residue Arg227 is part of the active site. His275 functions as the Proton donor in the catalytic mechanism.

This sequence belongs to the D-isomer specific 2-hydroxyacid dehydrogenase family. GhrA subfamily.

The protein resides in the cytoplasm. It carries out the reaction glycolate + NADP(+) = glyoxylate + NADPH + H(+). The catalysed reaction is (R)-glycerate + NAD(+) = 3-hydroxypyruvate + NADH + H(+). The enzyme catalyses (R)-glycerate + NADP(+) = 3-hydroxypyruvate + NADPH + H(+). Catalyzes the NADPH-dependent reduction of glyoxylate and hydroxypyruvate into glycolate and glycerate, respectively. The chain is Glyoxylate/hydroxypyruvate reductase A from Klebsiella pneumoniae subsp. pneumoniae (strain ATCC 700721 / MGH 78578).